The sequence spans 583 residues: Protein FMP25, mitochondrial (583 aa).

The N-terminal 25 residues, 1-25 (MSFRLFTRTSQRLPRLNWVSPIRRY), are a transit peptide targeting the mitochondrion. Residues 83 to 105 (AVGQGILILVVVGGLGTAYLRWP) form a helical membrane-spanning segment. RCC1 repeat units lie at residues 332–389 (KGQF…AIDK), 390–452 (TGEI…VTIR), 459–510 (DHHY…TETE), and 512–569 (ENEV…KEQR).

Its subcellular location is the mitochondrion membrane. The protein is Protein FMP25, mitochondrial (FMP25) of Saccharomyces cerevisiae (strain ATCC 204508 / S288c) (Baker's yeast).